A 454-amino-acid polypeptide reads, in one-letter code: (Z)-3-hexen-1-ol acetyltransferase (454 aa).

Residues H174 and D389 each act as proton acceptor in the active site.

It belongs to the plant acyltransferase family. Expressed in leaves and stems. Lower levels in flowers and barely detected in roots and siliques.

It carries out the reaction (3Z)-hex-3-en-1-ol + acetyl-CoA = (3Z)-hex-3-en-1-yl acetate + CoA. With respect to regulation, inhibited by magnesium, calcium, cobalt, zinc and copper. Its function is as follows. Acyltransferase involved in the production of green leaf volatiles (GLVs). Uses acetyl-CoA as substrate, but not malonyl-CoA or benzoyl-CoA. Prefers primary, medium-chain-length, aliphatic alcohols. The protein is (Z)-3-hexen-1-ol acetyltransferase (CHAT) of Arabidopsis thaliana (Mouse-ear cress).